Reading from the N-terminus, the 122-residue chain is Large ribosomal subunit protein uL14 (122 aa).

The protein belongs to the universal ribosomal protein uL14 family. As to quaternary structure, part of the 50S ribosomal subunit. Forms a cluster with proteins L3 and L19. In the 70S ribosome, L14 and L19 interact and together make contacts with the 16S rRNA in bridges B5 and B8.

Functionally, binds to 23S rRNA. Forms part of two intersubunit bridges in the 70S ribosome. This Polynucleobacter asymbioticus (strain DSM 18221 / CIP 109841 / QLW-P1DMWA-1) (Polynucleobacter necessarius subsp. asymbioticus) protein is Large ribosomal subunit protein uL14.